Consider the following 242-residue polypeptide: uncharacterized protein (242 aa).

The protein localises to the cytoplasm. It localises to the nucleus. This is an uncharacterized protein from Schizosaccharomyces pombe (strain 972 / ATCC 24843) (Fission yeast).